Reading from the N-terminus, the 155-residue chain is Ubiquinone biosynthesis protein COQ4 homolog, mitochondrial (155 aa).

This sequence belongs to the COQ4 family. In terms of assembly, component of a multi-subunit COQ enzyme complex. Zn(2+) serves as cofactor.

The protein localises to the mitochondrion inner membrane. It carries out the reaction a 4-hydroxy-3-methoxy-5-(all-trans-polyprenyl)benzoate + H(+) = a 2-methoxy-6-(all-trans-polyprenyl)phenol + CO2. The protein operates within cofactor biosynthesis; ubiquinone biosynthesis. Functionally, lyase that catalyzes the C1-decarboxylation of 4-hydroxy-3-methoxy-5-(all-trans-polyprenyl)benzoic acid into 2-methoxy-6-(all-trans-polyprenyl)phenol during ubiquinone biosynthesis. The sequence is that of Ubiquinone biosynthesis protein COQ4 homolog, mitochondrial from Cryptosporidium hominis.